Reading from the N-terminus, the 672-residue chain is ABC transporter G family member 21 (672 aa).

A compositionally biased stretch (polar residues) spans 1-35; sequence MMPPNEQESSFPKTPSANRHETSPVQENRFSSPSH. A disordered region spans residues 1 to 59; it reads MMPPNEQESSFPKTPSANRHETSPVQENRFSSPSHVNPCLDDDNDHDGPSHQSRQSSVL. The span at 50–59 shows a compositional bias: low complexity; it reads SHQSRQSSVL. Residues 68–322 form the ABC transporter domain; it reads LKFEELTYSI…FGSIGYQPGS (255 aa). Residue 117 to 124 participates in ATP binding; it reads GPSGSGKT. The ABC transmembrane type-2 domain maps to 411–617; it reads MQFSVLLKRG…CYKLLVGVQY (207 aa). The next 6 membrane-spanning stretches (helical) occupy residues 429-449, 460-480, 512-532, 543-563, 576-596, and 649-669; these read FSGLRIFMVMSVSLLSGLLWW, VGLLFFFSIFWGFFPLFNAIF, LPMELILPTIFVTITYWMGGL, LMIVLYNVLVAQGVGLALGAI, VLMLVFLLAGGYYIQHIPGFI, and WDVLALAVMLLLYRVLAYLAL.

This sequence belongs to the ABC transporter superfamily. ABCG family. Eye pigment precursor importer (TC 3.A.1.204) subfamily.

The protein localises to the membrane. The sequence is that of ABC transporter G family member 21 (ABCG21) from Arabidopsis thaliana (Mouse-ear cress).